A 387-amino-acid chain; its full sequence is MNLNDDDDNYNSAIVIDNGSYLCKAGFGGEESPRAIFRSVVGRPNFCTRGVKNGMGQKDCYVGDEAIVKKSILSLKCPNESKSPVNWDDIEKILHHVFYNELRVTIDKGVLLSEIPLNPKENRERITQIMFETFDTPNFYLANQSVLSLYSKGRLNGIVLDSGNNITYTVPIYEGHSIPNSINQLEIAGNSVTEYLMKILNENRGYNFTTSSEKEIVKDIKEKFGFISLNYNNDLYSTKVATNEIEKSYQLPDGQMITIGKERFICGEVLFEPSLVNIESYGVHQLLYNSIINCDFEIRRGLYNNIILSGGTTMLPDFNDRIKNELINLSPSSMKIKVVENNTNENNSHLAWIGGSIFSSLSTFEQQSISKQEYMEYGSKIIQRKCF.

Belongs to the actin family.

Its subcellular location is the cytoplasm. It localises to the cytoskeleton. It catalyses the reaction ATP + H2O = ADP + phosphate + H(+). Actins are highly conserved proteins that are involved in various types of cell motility and are ubiquitously expressed in all eukaryotic cells. Multiple isoforms are involved in various cellular functions such as cytoskeleton structure, cell mobility, chromosome movement and muscle contraction. The sequence is that of Putative actin-29 (act29) from Dictyostelium discoideum (Social amoeba).